The sequence spans 105 residues: Thioredoxin (105 aa).

Residues 1 to 105 (MVNNVTDSSF…SLLDWINKSI (105 aa)) form the Thioredoxin domain. Cysteine 30 and cysteine 33 are oxidised to a cystine.

This sequence belongs to the thioredoxin family.

Component of the thioredoxin-thioredoxin reductase system. Participates in various redox reactions through the reversible oxidation of its active center dithiol to a disulfide and catalyzes dithiol-disulfide exchange reactions. This chain is Thioredoxin (trxA), found in Rickettsia prowazekii (strain Madrid E).